The chain runs to 85 residues: Conotoxin Lt28.7 (85 aa).

The first 21 residues, 1–21 (MPKLEMMLLVLLILPLCYIDA), serve as a signal peptide directing secretion. The propeptide occupies 22–40 (VGPPPPWNMEDEIIEHWQE).

It belongs to the conotoxin D superfamily. In terms of processing, contains 5 disulfide bonds. As to expression, expressed by the venom duct.

Its subcellular location is the secreted. Functionally, probable neurotoxin. This is Conotoxin Lt28.7 from Conus litteratus (Lettered cone).